Reading from the N-terminus, the 159-residue chain is Probable E3 ubiquitin-protein ligase RHA1A (159 aa).

Residues 86–130 (CTVCLSDFESDDKVRQLPKCGHVFHHYCLDRWIVDYNKMKCPVCR) form an RING-type; atypical zinc finger.

In terms of tissue distribution, predominantly expressed in stems.

It carries out the reaction S-ubiquitinyl-[E2 ubiquitin-conjugating enzyme]-L-cysteine + [acceptor protein]-L-lysine = [E2 ubiquitin-conjugating enzyme]-L-cysteine + N(6)-ubiquitinyl-[acceptor protein]-L-lysine.. It participates in protein modification; protein ubiquitination. Functionally, probable E3 ubiquitin-protein ligase that may possess E3 ubiquitin ligase activity in vitro. In Arabidopsis thaliana (Mouse-ear cress), this protein is Probable E3 ubiquitin-protein ligase RHA1A.